We begin with the raw amino-acid sequence, 160 residues long: Eosinophil cationic protein (160 aa).

Residues 1 to 27 form the signal peptide; it reads MVPKLFTSQICLLLLLGLMGVEGSLHA. A required for nearly all of the bactericidal activity; partially involved in LPS-binding and bacterial membrane depolarization region spans residues 28–72; the sequence is RPPQFTRAQWFAIQHISLNPPRCTIAMRAINNYRWRCKNQNTFLR. Histidine 42 serves as the catalytic Proton acceptor. 4 cysteine pairs are disulfide-bonded: cysteine 50–cysteine 110, cysteine 64–cysteine 123, cysteine 82–cysteine 138, and cysteine 89–cysteine 98. Residue tyrosine 60 is modified to 3'-nitrotyrosine. 65–69 is a substrate binding site; it reads KNQNT. N-linked (GlcNAc...) asparagine glycans are attached at residues asparagine 84, asparagine 92, and asparagine 119. The active-site Proton donor is histidine 155.

The protein belongs to the pancreatic ribonuclease family. As to quaternary structure, interacts with bacterial lipopolysaccharide (LPS) and lipoteichoic acid (LTA). In vitro interacts with and insert into lipid bilayers composed of dioleoyl phosphatidylcholine and dioleoyl phosphatidylglycerol. In vitro, tends to form amyloid-like aggregates at pH 3, but not at pH 5, nor 7.

The protein resides in the secreted. Its function is as follows. Cytotoxin and helminthotoxin with low-efficiency ribonuclease activity. Possesses a wide variety of biological activities. Exhibits antibacterial activity, including cytoplasmic membrane depolarization of preferentially Gram-negative, but also Gram-positive strains. Promotes E.coli outer membrane detachment, alteration of the overall cell shape and partial loss of cell content. The polypeptide is Eosinophil cationic protein (RNASE3) (Homo sapiens (Human)).